Reading from the N-terminus, the 464-residue chain is L-cystine uptake protein TcyP (464 aa).

The next 10 membrane-spanning stretches (helical) occupy residues Thr-3–Met-23, Val-34–Pro-54, Tyr-73–Phe-93, Gly-107–Ala-127, Pro-184–Val-204, Ile-225–Met-245, Phe-263–Ala-283, Ala-347–Leu-367, Phe-371–Gly-391, and Phe-395–Ile-415.

The protein belongs to the dicarboxylate/amino acid:cation symporter (DAACS) (TC 2.A.23) family.

It is found in the membrane. In terms of biological role, mediates uptake of L-cystine, the oxidized form of L-cysteine. The chain is L-cystine uptake protein TcyP from Bacillus thuringiensis subsp. konkukian (strain 97-27).